A 519-amino-acid polypeptide reads, in one-letter code: Xylose import ATP-binding protein XylG (519 aa).

ABC transporter domains are found at residues 6–245 (LTMR…VGRE) and 262–507 (LDVR…LKPA). 38–45 (GENGAGKS) is an ATP binding site.

The protein belongs to the ABC transporter superfamily. Xylose importer (TC 3.A.1.2.4) family. As to quaternary structure, the complex is composed of two ATP-binding proteins (XylG), two transmembrane proteins (XylH) and a solute-binding protein (XylF).

It is found in the cell inner membrane. It catalyses the reaction D-xylose(out) + ATP + H2O = D-xylose(in) + ADP + phosphate + H(+). Part of the ABC transporter complex XylFGH involved in xylose import. Responsible for energy coupling to the transport system. The polypeptide is Xylose import ATP-binding protein XylG (Burkholderia cenocepacia (strain HI2424)).